We begin with the raw amino-acid sequence, 638 residues long: Outer dense fiber protein 2 (638 aa).

The residue at position 73 (Thr-73) is a Phosphothreonine. Ser-76 is subject to Phosphoserine; by TSSK4. Phosphoserine occurs at positions 87 and 90. At Thr-91 the chain carries Phosphothreonine. Phosphoserine occurs at positions 96 and 110. Lys-119 participates in a covalent cross-link: Glycyl lysine isopeptide (Lys-Gly) (interchain with G-Cter in SUMO2). Phosphoserine is present on Ser-120. Residues 125 to 198 (QKGERQMAKR…MSKLVEAEMD (74 aa)) are a coiled coil. A Phosphothreonine modification is found at Thr-212. 2 coiled-coil regions span residues 226 to 404 (DINT…AEQL) and 442 to 616 (EIIV…SDLR). A Phosphoserine modification is found at Ser-242. Residues 373–396 (KQKGDRDKESLKKAIRAQKERAEK) form a disordered region. At Ser-613 the chain carries Phosphoserine.

This sequence belongs to the ODF2 family. In terms of assembly, self-associates. Associates with microtubules and forms a fibrillar structure partially linked to the microtubule network. Interacts via its C-terminus with PLK1. Interacts with ODF1. Localized at the distal/subdistal appendages of mother centrioles. Interacts with MARK4; the interaction is required for localization of ODF2 to centrioles. Interacts with TSSK4. Interacts with AKNA. Interacts with QRICH2. Interacts with CFAP58. Interacts with BBOF1. Interacts with CCDC38. Interacts with CCDC42. In terms of processing, tyrosine phosphorylated. Phosphorylated on Ser-76 by TSSK4.

Its subcellular location is the cytoplasm. The protein resides in the cytoskeleton. It localises to the microtubule organizing center. The protein localises to the centrosome. It is found in the cell projection. Its subcellular location is the cilium. The protein resides in the centriole. It localises to the spindle pole. The protein localises to the flagellum. In terms of biological role, seems to be a major component of sperm tail outer dense fibers (ODF). ODFs are filamentous structures located on the outside of the axoneme in the midpiece and principal piece of the mammalian sperm tail and may help to maintain the passive elastic structures and elastic recoil of the sperm tail. May have a modulating influence on sperm motility. Functions as a general scaffold protein that is specifically localized at the distal/subdistal appendages of mother centrioles. Component of the centrosome matrix required for the localization of PLK1 and NIN to the centrosomes. Required for the formation and/or maintenance of normal CETN1 assembly. The protein is Outer dense fiber protein 2 (ODF2) of Macaca fascicularis (Crab-eating macaque).